Here is a 374-residue protein sequence, read N- to C-terminus: Translocating chain-associated membrane protein 1 (374 aa).

Residues 2–29 are Cytoplasmic-facing; the sequence is AIRKKSTKSPPVLSHEFILQNHADIVSC. A helical membrane pass occupies residues 30-50; that stretch reads VAMVFLLGLMFEITAKASIIF. At 51–76 the chain is on the lumenal side; the sequence is VTLQYNVTLPATEEQATESTSLYYYG. N56 carries an N-linked (GlcNAc...) asparagine glycan. Residues 77–97 traverse the membrane as a helical segment; the sequence is IKDLATVFFYMLVAIIIHAII. The Cytoplasmic portion of the chain corresponds to 98–121; it reads QEYVLDKINRRMHFSKTKHSKFNE. Residues 117-326 form the TLC domain; it reads SKFNESGQLS…NFQLRRWREH (210 aa). A helical transmembrane segment spans residues 122–142; it reads SGQLSAFYLFSCIWGTFILIS. Over 143–159 the chain is Lumenal; that stretch reads ENYISDPTILWRAYPHN. Residues 160–180 form a helical membrane-spanning segment; the sequence is LMTFQMKFFYIAQLAYWFHAF. Over 181–192 the chain is Cytoplasmic; that stretch reads PELYFQKTKKED. Residues 193 to 213 form a helical membrane-spanning segment; it reads IPRQLVYIGLYLFHIAGAYLL. The Lumenal portion of the chain corresponds to 214–217; sequence NLNH. Residues 218–238 form a helical membrane-spanning segment; that stretch reads LGLVLLVLHYFVEFLFHISRL. The Cytoplasmic segment spans residues 239–251; sequence FYFSDEKYQKGFS. The helical transmembrane segment at 252 to 272 threads the bilayer; the sequence is LWAVLFVLGRLLTLILSVLTV. The Lumenal portion of the chain corresponds to 273-297; the sequence is GFGLARAENQKLDFSAGNFNVLAVR. A helical membrane pass occupies residues 298-318; it reads IAVLASICITQAFMMWKFINF. The Cytoplasmic portion of the chain corresponds to 319-374; sequence QLRRWREHSTFQAPVVKKKPTVTKGRSSRKGTENGVNGTVTSNGADSPRNRKEKSS. Residues 334-347 show a composition bias toward basic residues; sequence VKKKPTVTKGRSSR. The tract at residues 334–374 is disordered; that stretch reads VKKKPTVTKGRSSRKGTENGVNGTVTSNGADSPRNRKEKSS. A compositionally biased stretch (polar residues) spans 352 to 363; the sequence is NGVNGTVTSNGA. S365 is subject to Phosphoserine.

This sequence belongs to the TRAM family. As to quaternary structure, interacts with SEC61B. May interact with Derlin-1/DERL1. N-glycosylated.

The protein resides in the endoplasmic reticulum membrane. Involved in the translocation of nascent protein chains into or through the endoplasmic reticulum (ER) membrane by facilitating the proper chain positioning at the SEC61 channel. Regulates the exposure of nascent secretory protein chain to the cytosol during translocation into the ER. May affect the phospholipid bilayer in the vicinity of the lateral gate of the SEC61 channel, thereby facilitating ER protein transport. Intimately associates with transmembrane (TM) domain of nascent membrane proteins during the entire integration process into the ER membrane. Associates with the second TM domain of G-protein-coupled receptor opsin/OPSD nascent chain in the ER membrane, which may facilitate its integration into the membrane. Under conditions of ER stress, participates in the disposal of misfolded ER membrane proteins during the unfolded protein response (UPR), an integrated stress response (ISR) pathway, by selectively retrotranslocating misfolded ER-membrane proteins from the ER into the cytosol where they are ubiquitinated and degraded by the proteasome. The sequence is that of Translocating chain-associated membrane protein 1 (TRAM1) from Canis lupus familiaris (Dog).